The primary structure comprises 301 residues: Acetylglutamate kinase (301 aa).

Substrate is bound by residues G72 to G73, R94, and N199.

Belongs to the acetylglutamate kinase family. ArgB subfamily.

Its subcellular location is the cytoplasm. The catalysed reaction is N-acetyl-L-glutamate + ATP = N-acetyl-L-glutamyl 5-phosphate + ADP. It participates in amino-acid biosynthesis; L-arginine biosynthesis; N(2)-acetyl-L-ornithine from L-glutamate: step 2/4. In terms of biological role, catalyzes the ATP-dependent phosphorylation of N-acetyl-L-glutamate. The chain is Acetylglutamate kinase from Azorhizobium caulinodans (strain ATCC 43989 / DSM 5975 / JCM 20966 / LMG 6465 / NBRC 14845 / NCIMB 13405 / ORS 571).